A 57-amino-acid chain; its full sequence is MSGLSVFILIALVLSVIIDVLNNSKVEAACKENCRQYCQAKGARNGKCINSNCKCYY.

A signal peptide spans 1–15 (MSGLSVFILIALVLS). A propeptide spanning residues 16–24 (VIIDVLNNS) is cleaved from the precursor. 3 disulfide bridges follow: Cys30/Cys48, Cys34/Cys53, and Cys38/Cys55.

This sequence belongs to the short scorpion toxin superfamily. Potassium channel inhibitor family. Alpha-KTx 26 subfamily. As to expression, expressed by the venom gland.

The protein localises to the secreted. In terms of biological role, recombinant toxin that reversibly inhibits the potassium current of mKv1.3/KCNA3 channel stably expressed in COS7 cells (IC(50)=150 nM). This Mesobuthus gibbosus (Mediterranean checkered scorpion) protein is Potassium channel toxin alpha-KTx 26.3.